Here is a 686-residue protein sequence, read N- to C-terminus: Asparagine-rich protein (686 aa).

An N-terminal signal peptide occupies residues 1 to 18; it reads MKGTSALLLIGFFHATIS. Disordered regions lie at residues 34-73, 125-148, and 201-236; these read KRGN…DKTA, SLTS…SSSI, and ITRQ…QPPN. Polar residues predominate over residues 37-49; the sequence is NLNTGGQITSNSA. Residues 62–73 are compositionally biased toward basic and acidic residues; that stretch reads EPPKRRNTDKTA.

Prismatic layer of shell (at protein level). Expressed primarily in the mantle with highest level in the mantle edge and lower level in the mantle pallium.

The protein localises to the secreted. This chain is Asparagine-rich protein, found in Margaritifera margaritifera (Freshwater pearl mussel).